The following is a 100-amino-acid chain: Small ribosomal subunit protein uS14c (100 aa).

Belongs to the universal ribosomal protein uS14 family. As to quaternary structure, part of the 30S ribosomal subunit.

Its subcellular location is the plastid. The protein resides in the chloroplast. In terms of biological role, binds 16S rRNA, required for the assembly of 30S particles. This Nasturtium officinale (Watercress) protein is Small ribosomal subunit protein uS14c.